The chain runs to 646 residues: uncharacterized protein (646 aa).

8 consecutive transmembrane segments (helical) span residues 20 to 42 (ILSR…LYLL), 55 to 77 (FLAG…IHQV), 97 to 115 (LLHF…HYML), 127 to 149 (YTFD…FSYW), 159 to 181 (IAFV…FFKL), 188 to 206 (ILLG…LLLA), 216 to 238 (YGAV…YHLF), and 251 to 273 (WVTM…IGTA).

Its subcellular location is the cell membrane. This is an uncharacterized protein from Bacillus subtilis (strain 168).